A 234-amino-acid polypeptide reads, in one-letter code: Glucosamine-6-phosphate deaminase (234 aa).

The active-site Proton acceptor; for enolization step is the Asp-62. Asn-128 (for ring-opening step) is an active-site residue. The active-site Proton acceptor; for ring-opening step is the His-130. The For ring-opening step role is filled by Glu-135.

The protein belongs to the glucosamine/galactosamine-6-phosphate isomerase family. NagB subfamily.

It carries out the reaction alpha-D-glucosamine 6-phosphate + H2O = beta-D-fructose 6-phosphate + NH4(+). Its pathway is amino-sugar metabolism; N-acetylneuraminate degradation; D-fructose 6-phosphate from N-acetylneuraminate: step 5/5. Catalyzes the reversible isomerization-deamination of glucosamine 6-phosphate (GlcN6P) to form fructose 6-phosphate (Fru6P) and ammonium ion. This is Glucosamine-6-phosphate deaminase from Streptococcus pyogenes serotype M18 (strain MGAS8232).